Here is a 127-residue protein sequence, read N- to C-terminus: Anti-adapter protein IraD (127 aa).

This sequence belongs to the GpW/Gp25 family. IraD subfamily. Interacts with RssB.

It is found in the cytoplasm. Inhibits RpoS proteolysis by regulating RssB activity, thereby increasing the stability of the sigma stress factor RpoS during oxidative stress. Its effect on RpoS stability is due to its interaction with RssB, which probably blocks the interaction of RssB with RpoS, and the consequent delivery of the RssB-RpoS complex to the ClpXP protein degradation pathway. The protein is Anti-adapter protein IraD of Escherichia coli O6:H1 (strain CFT073 / ATCC 700928 / UPEC).